The following is a 205-amino-acid chain: Leucyl/phenylalanyl-tRNA--protein transferase (205 aa).

Belongs to the L/F-transferase family.

It is found in the cytoplasm. The catalysed reaction is N-terminal L-lysyl-[protein] + L-leucyl-tRNA(Leu) = N-terminal L-leucyl-L-lysyl-[protein] + tRNA(Leu) + H(+). It carries out the reaction N-terminal L-arginyl-[protein] + L-leucyl-tRNA(Leu) = N-terminal L-leucyl-L-arginyl-[protein] + tRNA(Leu) + H(+). It catalyses the reaction L-phenylalanyl-tRNA(Phe) + an N-terminal L-alpha-aminoacyl-[protein] = an N-terminal L-phenylalanyl-L-alpha-aminoacyl-[protein] + tRNA(Phe). Its function is as follows. Functions in the N-end rule pathway of protein degradation where it conjugates Leu, Phe and, less efficiently, Met from aminoacyl-tRNAs to the N-termini of proteins containing an N-terminal arginine or lysine. The sequence is that of Leucyl/phenylalanyl-tRNA--protein transferase from Mesorhizobium japonicum (strain LMG 29417 / CECT 9101 / MAFF 303099) (Mesorhizobium loti (strain MAFF 303099)).